The sequence spans 520 residues: Mu-like prophage FluMu protein gp29 (520 aa).

It to phage Mu protein gp29.

This chain is Mu-like prophage FluMu protein gp29, found in Haemophilus influenzae (strain ATCC 51907 / DSM 11121 / KW20 / Rd).